The sequence spans 759 residues: Multifunctional tryptophan biosynthesis protein (759 aa).

The 197-residue stretch at 27 to 223 (PIVMIDNYDS…LNLTAGTWEE (197 aa)) folds into the Glutamine amidotransferase type-1 domain. 80–82 (GPG) is a binding site for L-glutamine. The active-site Nucleophile; for GATase activity is C108. L-glutamine contacts are provided by residues Q112 and 158-159 (SL). Active-site for GATase activity residues include H197 and E199. The interval 257 to 519 (ILEKIHAQRL…DPAAFARELL (263 aa)) is indole-3-glycerol phosphate synthase. The tract at residues 536–759 (LVKVCGTRSL…KAFINAVKEL (224 aa)) is N-(5'-phosphoribosyl)anthranilate isomerase.

The catalysed reaction is N-(5-phospho-beta-D-ribosyl)anthranilate = 1-(2-carboxyphenylamino)-1-deoxy-D-ribulose 5-phosphate. The enzyme catalyses 1-(2-carboxyphenylamino)-1-deoxy-D-ribulose 5-phosphate + H(+) = (1S,2R)-1-C-(indol-3-yl)glycerol 3-phosphate + CO2 + H2O. It carries out the reaction chorismate + L-glutamine = anthranilate + pyruvate + L-glutamate + H(+). It functions in the pathway amino-acid biosynthesis; L-tryptophan biosynthesis; L-tryptophan from chorismate: step 1/5. It participates in amino-acid biosynthesis; L-tryptophan biosynthesis; L-tryptophan from chorismate: step 3/5. Its pathway is amino-acid biosynthesis; L-tryptophan biosynthesis; L-tryptophan from chorismate: step 4/5. Functionally, trifunctional enzyme bearing the Gln amidotransferase (GATase) domain of anthranilate synthase, indole-glycerolphosphate synthase, and phosphoribosylanthranilate isomerase activities. This chain is Multifunctional tryptophan biosynthesis protein (trp1), found in Schizosaccharomyces pombe (strain 972 / ATCC 24843) (Fission yeast).